The chain runs to 83 residues: CLAVATA3/ESR (CLE)-related protein 20 (83 aa).

The N-terminal stretch at 1 to 29 (MKNKNMNPSRPRLLCLIVFLFLVIVLSKA) is a signal peptide.

This sequence belongs to the CLV3/ESR signal peptide family. In terms of tissue distribution, mostly expressed in roots, seedlings, leaves, flowers, stems and apex, and, to a lower extent, in siliques and pollen.

The protein localises to the secreted. The protein resides in the extracellular space. Its function is as follows. Extracellular signal peptide that regulates cell fate. Represses root apical meristem maintenance. Inhibits irreversibly root growth by reducing cell division rates in the root apical meristem. Regulates the transition of protophloem cells from proliferation to differentiation, thus impinging on postembryonic growth capacity of the root meristem; this signaling pathway requires CRN and CLV2. This Arabidopsis thaliana (Mouse-ear cress) protein is CLAVATA3/ESR (CLE)-related protein 20.